The chain runs to 328 residues: GMP reductase (328 aa).

Cys176 serves as the catalytic Thioimidate intermediate. 205–228 (IIADGGIRTHGDIAKSIRFGASMI) contacts NADP(+).

This sequence belongs to the IMPDH/GMPR family. GuaC type 2 subfamily.

The enzyme catalyses IMP + NH4(+) + NADP(+) = GMP + NADPH + 2 H(+). Its function is as follows. Catalyzes the irreversible NADPH-dependent deamination of GMP to IMP. It functions in the conversion of nucleobase, nucleoside and nucleotide derivatives of G to A nucleotides, and in maintaining the intracellular balance of A and G nucleotides. This is GMP reductase from Streptococcus pneumoniae serotype 2 (strain D39 / NCTC 7466).